Reading from the N-terminus, the 319-residue chain is Urease accessory protein UreD (319 aa).

The disordered stretch occupies residues 284 to 319; sequence RLSTPQPPREWPLQEEGTFSNERFTKDHQSPSASPH.

The protein belongs to the UreD family. UreD, UreF and UreG form a complex that acts as a GTP-hydrolysis-dependent molecular chaperone, activating the urease apoprotein by helping to assemble the nickel containing metallocenter of UreC. The UreE protein probably delivers the nickel.

The protein resides in the cytoplasm. Required for maturation of urease via the functional incorporation of the urease nickel metallocenter. The protein is Urease accessory protein UreD of Prochlorococcus marinus (strain MIT 9313).